The chain runs to 44 residues: Small ribosomal subunit protein eS31 (44 aa).

Cysteine 18, cysteine 21, cysteine 35, and cysteine 38 together coordinate Zn(2+). The segment at 18-38 (CPRCGDTVLAEHEDRQHCGKC) adopts a C4-type zinc-finger fold.

This sequence belongs to the eukaryotic ribosomal protein eS31 family. As to quaternary structure, part of the 30S ribosomal subunit. Zn(2+) is required as a cofactor.

In Haloarcula marismortui (strain ATCC 43049 / DSM 3752 / JCM 8966 / VKM B-1809) (Halobacterium marismortui), this protein is Small ribosomal subunit protein eS31.